The sequence spans 49 residues: uncharacterized protein (49 aa).

Residues 23–43 traverse the membrane as a helical segment; that stretch reads LYVISFVLFIVLFFGMFFKLI.

The protein resides in the host membrane. This is an uncharacterized protein from Spiroplasma melliferum (SpV1).